The chain runs to 228 residues: Ribonuclease HII (228 aa).

The 192-residue stretch at G11–M202 folds into the RNase H type-2 domain. A divalent metal cation contacts are provided by D17, E18, and D111.

It belongs to the RNase HII family. The cofactor is Mn(2+). Mg(2+) serves as cofactor.

Its subcellular location is the cytoplasm. The catalysed reaction is Endonucleolytic cleavage to 5'-phosphomonoester.. Its function is as follows. Endonuclease that specifically degrades the RNA of RNA-DNA hybrids. The protein is Ribonuclease HII of Saccharopolyspora erythraea (strain ATCC 11635 / DSM 40517 / JCM 4748 / NBRC 13426 / NCIMB 8594 / NRRL 2338).